The chain runs to 379 residues: Cytochrome b (379 aa).

4 helical membrane-spanning segments follow: residues F33–M53, W77–V98, W113–L133, and F178–L198. Positions 83 and 97 each coordinate heme b. Residues H182 and H196 each contribute to the heme b site. Residue H201 participates in a ubiquinone binding. The next 4 helical transmembrane spans lie at I226–S246, L288–H308, L320–G340, and Y347–X367.

The protein belongs to the cytochrome b family. In terms of assembly, the cytochrome bc1 complex contains 11 subunits: 3 respiratory subunits (MT-CYB, CYC1 and UQCRFS1), 2 core proteins (UQCRC1 and UQCRC2) and 6 low-molecular weight proteins (UQCRH/QCR6, UQCRB/QCR7, UQCRQ/QCR8, UQCR10/QCR9, UQCR11/QCR10 and a cleavage product of UQCRFS1). This cytochrome bc1 complex then forms a dimer. The cofactor is heme b.

Its subcellular location is the mitochondrion inner membrane. In terms of biological role, component of the ubiquinol-cytochrome c reductase complex (complex III or cytochrome b-c1 complex) that is part of the mitochondrial respiratory chain. The b-c1 complex mediates electron transfer from ubiquinol to cytochrome c. Contributes to the generation of a proton gradient across the mitochondrial membrane that is then used for ATP synthesis. This Myotis goudotii (Malagasy mouse-eared bat) protein is Cytochrome b (MT-CYB).